Consider the following 166-residue polypeptide: Large ribosomal subunit protein uL10 (166 aa).

Belongs to the universal ribosomal protein uL10 family. In terms of assembly, part of the ribosomal stalk of the 50S ribosomal subunit. The N-terminus interacts with L11 and the large rRNA to form the base of the stalk. The C-terminus forms an elongated spine to which L12 dimers bind in a sequential fashion forming a multimeric L10(L12)X complex.

Functionally, forms part of the ribosomal stalk, playing a central role in the interaction of the ribosome with GTP-bound translation factors. In Lysinibacillus sphaericus (strain C3-41), this protein is Large ribosomal subunit protein uL10.